The following is a 300-amino-acid chain: F-box/LRR-repeat protein 15 (300 aa).

Methionine 1 bears the N-acetylmethionine mark. Residues 19–66 (LLDLPWEDVLLPHVLNWVPLRQLLRLQRVSRAFRALVQLHLARLRRFD) enclose the F-box domain. Positions 113–269 (NPQLRSVALA…EPSLSRLRKR (157 aa)) are interaction with SMURF1. LRR repeat units follow at residues 141–162 (RLQR…RGLA), 167–188 (ALEE…VYLA), 194–215 (GLRS…QELA), 220–241 (QLEH…RTLA), and 246–267 (ALRS…SRLR).

Belongs to the FBXL15 family. In terms of assembly, part of the SCF (SKP1-CUL1-F-box) E3 ubiquitin-protein ligase complex SCF(FBXL15) composed of CUL1, SKP1, RBX1 and FBXL15. As to expression, expressed in heart, liver, spleen, bone, muscle, brain and kidney (at protein level).

It localises to the cytoplasm. Its pathway is protein modification; protein ubiquitination. In terms of biological role, substrate recognition component of a SCF (SKP1-CUL1-F-box protein) E3 ubiquitin-protein ligase complex which mediates the ubiquitination and subsequent proteasomal degradation of SMURF1, thereby acting as a positive regulator of the BMP signaling pathway. Required for dorsal/ventral pattern formation and bone mass maintenance. Also mediates ubiquitination of SMURF2 and WWP2. The protein is F-box/LRR-repeat protein 15 (Fbxl15) of Mus musculus (Mouse).